We begin with the raw amino-acid sequence, 156 residues long: uncharacterized protein (156 aa).

This sequence to L.lactis TrpF C-terminal region.

This is an uncharacterized protein from Bacillus subtilis (strain 168).